The sequence spans 235 residues: Calcium-activated potassium channel subunit beta-2 (235 aa).

The ball and chain stretch occupies residues 1-45; sequence MFIWTSGRTSSSYRHDEKRNIYQKIRDHDLLDKRKTVTALKAGED. The Cytoplasmic segment spans residues 1–46; that stretch reads MFIWTSGRTSSSYRHDEKRNIYQKIRDHDLLDKRKTVTALKAGEDR. A helical membrane pass occupies residues 47 to 67; it reads AILLGLAMMVCSIMMYFLLGI. The Extracellular segment spans residues 68 to 194; sequence TLLRSYMQSV…VILTKLYSSN (127 aa). N88, N96, and N119 each carry an N-linked (GlcNAc...) asparagine glycan. Residues 195-215 form a helical membrane-spanning segment; that stretch reads VLFHSLFWPTCMMAGGVAIVA. The Cytoplasmic segment spans residues 216–235; that stretch reads MVKLTQYLSLLCERIQRINR.

It belongs to the KCNMB (TC 8.A.14.1) family. KCNMB2 subfamily. In terms of assembly, interacts with KCNMA1 tetramer. There are probably 4 molecules of KCMNB2 per KCNMA1 tetramer. In terms of processing, N-glycosylated. In terms of tissue distribution, expressed in kidney, heart and brain. Highly expressed in ovary. Expressed at low level in other tissues.

The protein resides in the membrane. Regulatory subunit of the calcium activated potassium KCNMA1 (maxiK) channel. Modulates the calcium sensitivity and gating kinetics of KCNMA1, thereby contributing to KCNMA1 channel diversity. Acts as a negative regulator that confers rapid and complete inactivation of KCNMA1 channel complex. May participate in KCNMA1 inactivation in chromaffin cells of the adrenal gland or in hippocampal CA1 neurons. The polypeptide is Calcium-activated potassium channel subunit beta-2 (KCNMB2) (Homo sapiens (Human)).